We begin with the raw amino-acid sequence, 208 residues long: Guanylate kinase (208 aa).

Residues 4–181 (GLLIVISGPS…AVEKIQSIIS (178 aa)) enclose the Guanylate kinase-like domain. 11–18 (GPSGTGKG) serves as a coordination point for ATP.

The protein belongs to the guanylate kinase family.

The protein localises to the cytoplasm. The enzyme catalyses GMP + ATP = GDP + ADP. Functionally, essential for recycling GMP and indirectly, cGMP. This chain is Guanylate kinase, found in Clostridium tetani (strain Massachusetts / E88).